Consider the following 385-residue polypeptide: Putative ESX-1 scaffolding and assembly protein SaeC (385 aa).

It localises to the cytoplasm. In terms of biological role, may be involved in assembly of the ESX-1 / type VII specialized secretion system (T7SS), which exports several proteins including EsxA and EsxB. Involved in DNA conjugation in recipient (MKD8) strain. This is Putative ESX-1 scaffolding and assembly protein SaeC from Mycolicibacterium smegmatis (strain ATCC 700084 / mc(2)155) (Mycobacterium smegmatis).